The primary structure comprises 136 residues: MIKLAILLLFTVAIVRCQGPFGPGCEEAGCPEGSACNIITDRCTCSGVRCRMHCPHGFQRSRYGCEFCKCRLEPMKATCDISECPEGMMCSRLTNKCDCKIDINCRKTCPNGLKRDKLGCEYCECRPKRKLIPRLS.

Residues 1-17 (MIKLAILLLFTVAIVRC) form the signal peptide. A Pyrrolidone carboxylic acid modification is found at Q18. Disulfide bonds link C25-C36, C30-C43, C45-C65, C50-C68, C54-C70, C79-C90, C84-C97, C99-C120, C105-C123, and C109-C125. Residues 45 to 70 (CSGVRCRMHCPHGFQRSRYGCEFCKC) form the Antistasin-like 1 domain. The region spanning 100 to 125 (KIDINCRKTCPNGLKRDKLGCEYCEC) is the Antistasin-like 2 domain. Heparin contacts are provided by residues 114–117 (KRDK) and 128–135 (KRKLIPRL).

This sequence belongs to the protease inhibitor I15 (antistasin) family.

Its subcellular location is the secreted. This highly disulfide-bonded protein is a potent inhibitor of factor Xa. May have therapeutic utility as an anticoagulant. Also exhibits a strong metastatic activity. In Haementeria officinalis (Mexican leech), this protein is Antistasin.